We begin with the raw amino-acid sequence, 299 residues long: Transcription elongation factor A protein 2 (299 aa).

The 78-residue stretch at 5-82 folds into the TFIIS N-terminal domain; the sequence is EEIARIARRL…KSWKKLLDVS (78 aa). Residue Lys57 forms a Glycyl lysine isopeptide (Lys-Gly) (interchain with G-Cter in ubiquitin) linkage. Ser59 and Ser100 each carry phosphoserine. Residues 83 to 126 are disordered; that stretch reads DGKSRDQGRGTPLPTSSSKDASGTTDLSCKKPDPPRTSSTPRIT. Residues 95-109 show a composition bias toward polar residues; sequence LPTSSSKDASGTTDL. The TFIIS central domain occupies 138–254; it reads VRNKCREMLT…EHQMARTGGT (117 aa). The segment at 257–297 adopts a TFIIS-type zinc-finger fold; sequence DLFTCNKCRKKNCTYTQVQTRSSDEPMTTYVVCNECGNRWK. Zn(2+) is bound by residues Cys261, Cys264, Cys289, and Cys292.

It belongs to the TFS-II family. In terms of assembly, interacts with the basal transcription factor GTF2B. Interacts with REXO1. As to expression, testis specific.

It is found in the nucleus. Functionally, necessary for efficient RNA polymerase II transcription elongation past template-encoded arresting sites. The arresting sites in DNA have the property of trapping a certain fraction of elongating RNA polymerases that pass through, resulting in locked ternary complexes. Cleavage of the nascent transcript by S-II allows the resumption of elongation from the new 3'-terminus. This chain is Transcription elongation factor A protein 2 (Tcea2), found in Rattus norvegicus (Rat).